Reading from the N-terminus, the 260-residue chain is WUSCHEL-related homeobox 2 (260 aa).

The homeobox; WUS-type DNA-binding region spans 10-74 (ASSSRWNPTK…NHKARQRQKQ (65 aa)).

This sequence belongs to the WUS homeobox family.

It is found in the nucleus. Probable transcription factor involved in embryonic patterning. Required for apical embryo development after fertilization. Its specific localization to the apical daughter cell of the zygote, while WOX8 is confined to the basal cell, suggests that the asymmetric division of the plant zygote separates determinants of apical and basal cell fates. In Arabidopsis thaliana (Mouse-ear cress), this protein is WUSCHEL-related homeobox 2 (WOX2).